The sequence spans 381 residues: Galactose-1-phosphate uridylyltransferase (381 aa).

Cys-65 and Cys-68 together coordinate Zn(2+). 90-91 (ND) lines the UDP-alpha-D-glucose pocket. His-131 serves as a coordination point for Zn(2+). Asn-175 provides a ligand contact to UDP-alpha-D-glucose. Residue His-186 participates in Zn(2+) binding. His-188 functions as the Tele-UMP-histidine intermediate in the catalytic mechanism. Gln-190 serves as a coordination point for UDP-alpha-D-glucose. 4 residues coordinate Fe cation: Glu-204, His-306, His-323, and His-325. UDP-alpha-D-glucose contacts are provided by residues 338-341 (KFMV) and 343-344 (FE).

The protein belongs to the galactose-1-phosphate uridylyltransferase type 1 family. As to quaternary structure, homodimer. The cofactor is Zn(2+).

It catalyses the reaction alpha-D-galactose 1-phosphate + UDP-alpha-D-glucose = alpha-D-glucose 1-phosphate + UDP-alpha-D-galactose. Its pathway is carbohydrate metabolism; galactose metabolism. This is Galactose-1-phosphate uridylyltransferase (GAL7) from Cryptococcus neoformans var. neoformans serotype D (strain B-3501A) (Filobasidiella neoformans).